We begin with the raw amino-acid sequence, 140 residues long: MGRISGLVPSRFLTLLAHLVIVITLFWSRESNIQACLPLKFTPEEYEKQDNQLVAALCLTLGLFAVELAGFLSGVSMFNSTQSLLSIAAHCSASVALSFFIFERWECTTYWYIFAFCSAFPAVTETALFIAVFGLKKKPF.

2 helical membrane passes run 7-27 and 53-73; these read LVPSRFLTLLAHLVIVITLFW and LVAALCLTLGLFAVELAGFLS. Asparagine 79 is a glycosylation site (N-linked (GlcNAc...) asparagine). 2 helical membrane-spanning segments follow: residues 83 to 103 and 113 to 133; these read SLLSIAAHCSASVALSFFIFE and IFAFCSAFPAVTETALFIAVF.

As to quaternary structure, part of the tectonic-like complex (also named B9 complex). Interacts with TMEM237, TMEM231, MKS1 and TMEM216.

The protein localises to the membrane. It localises to the cell projection. The protein resides in the cilium. In terms of biological role, plays a role in cilia formation and embryonic patterning. Requires for normal Sonic hedgehog (Shh) signaling in the neural tube and acts in combination with GLI2 and GLI3 to pattern ventral and intermediate neuronal cell types. During ciliogenesis regulates the ciliary transition zone localization of some MKS complex proteins. The protein is Transmembrane protein 107 of Rattus norvegicus (Rat).